A 217-amino-acid polypeptide reads, in one-letter code: MADKTGTPHPLTEPGVWIERIGGRVFPPHLPALFLDRDGTINVDTDYPSDPAEIVLRPQMLPAIATANRAGIPVVVVTNQSGIARGYFGWSAFAAVNGRVLELLREEGVFVDMVLACAYHEAGVGPLAIPDHPMRKPNPGMLVEAGKRLALDLQRSLIVGDKLADMQAGKRAGLAQGWLVDGEAAVQPGFAIRPLRDSSELGDLLAAIETLGRDNRS.

Catalysis depends on D36, which acts as the Nucleophile. Mg(2+)-binding residues include D36 and D38. Substrate contacts are provided by residues 36 to 38, 44 to 47, 78 to 81, and 135 to 136; these read DRD, DTDY, TNQS, and RK. The active-site Proton donor is the D38. Positions 161 and 162 each coordinate Mg(2+). Position 162 (K162) interacts with substrate.

It belongs to the gmhB family. In terms of assembly, monomer. Mg(2+) serves as cofactor.

Its subcellular location is the cytoplasm. It catalyses the reaction D-glycero-beta-D-manno-heptose 1,7-bisphosphate + H2O = D-glycero-beta-D-manno-heptose 1-phosphate + phosphate. Its pathway is nucleotide-sugar biosynthesis; ADP-L-glycero-beta-D-manno-heptose biosynthesis; ADP-L-glycero-beta-D-manno-heptose from D-glycero-beta-D-manno-heptose 7-phosphate: step 2/4. Functionally, converts the D-glycero-beta-D-manno-heptose 1,7-bisphosphate (beta-HBP) intermediate into D-glycero-beta-D-manno-heptose 1-phosphate by removing the phosphate group at the C-7 position. This chain is D-glycero-beta-D-manno-heptose-1,7-bisphosphate 7-phosphatase (gmhB), found in Mesorhizobium japonicum (strain LMG 29417 / CECT 9101 / MAFF 303099) (Mesorhizobium loti (strain MAFF 303099)).